The chain runs to 620 residues: Sodium-dependent dopamine transporter (620 aa).

The Cytoplasmic portion of the chain corresponds to 1-56 (MSKSKCSVGLMSSVVAPAKEPNAMGPKEVELILVKEQNGVQLTSSTLTNPRQSPVE). The chain crosses the membrane as a discontinuously helical span at residues 57–95 (AQDRETWGKKIDFLLSVIGFAVDLANVWRFPYLCYKNGG). The Na(+) site is built by glycine 75, alanine 77, valine 78, aspartate 79, and asparagine 82. Aspartate 79 is a binding site for dopamine. A run of 2 helical transmembrane segments spans residues 96-127 (GAFL…NREG) and 128-171 (AAGV…FSSF). Dopamine is bound by residues serine 149 and glycine 153. The Extracellular segment spans residues 172-236 (TTELPWIHCN…SHGIDDLGPP (65 aa)). A disulfide bridge links cysteine 180 with cysteine 189. 3 N-linked (GlcNAc...) asparagine glycosylation sites follow: asparagine 181, asparagine 188, and asparagine 205. Helical transmembrane passes span 237–256 (RWQL…FSLW) and 257–287 (KGVK…GVTL). Over 288–306 (PGAIDGIRAYLSVDFYRLC) the chain is Extracellular. Residues 307–335 (EASVWIDAATQVCFSLGVGFGVLIAFSSY) traverse the membrane as a discontinuously helical segment. Glutamine 317 serves as a coordination point for chloride. Phenylalanine 320 contributes to the dopamine binding site. The Na(+) site is built by serine 321 and asparagine 353. Serine 321 serves as a coordination point for chloride. A helical membrane pass occupies residues 336 to 376 (NKFTNNCYRDAIVTTSINSLTSFSSGFVVFSFLGYMAQKHS). A chloride-binding site is contributed by serine 357. Over 377-400 (VPIGDVAKDGPGLIFIIYPEAIAT) the chain is Extracellular. A run of 3 helical transmembrane segments spans residues 401–442 (LPLS…QLLH), 443–466 (RHRE…CVTN), and 467–499 (GGIY…AWFY). Leucine 418, aspartate 421, and serine 422 together coordinate Na(+). The dopamine site is built by serine 422 and alanine 423. Topologically, residues 500–516 (GVGQFSDDIQQMTGQRP) are cytoplasmic. Residues 517-542 (SLYWRLCWKLVSPCFLLFVVVVSIVT) traverse the membrane as a helical segment. The Extracellular segment spans residues 543-553 (FRPPHYGAYIF). A helical transmembrane segment spans residues 554-583 (PDWANALGWVIATSSMAMVPIYAAYKFCSL). The interaction with TGFB1I1 stretch occupies residues 561-590 (GWVIATSSMAMVPIYAAYKFCSLPGSFREK). Topologically, residues 584–620 (PGSFREKLAYAIAPEKDRELVDRGEVRQFTLRHWLKV) are cytoplasmic.

The protein belongs to the sodium:neurotransmitter symporter (SNF) (TC 2.A.22) family. SLC6A3 subfamily. Monomer. Homooligomer; disulfide-linked. Interacts with PRKCABP and TGFB1I1. Interacts (via N-terminus) with SYNGR3 (via N-terminus). Interacts with SLC18A2. Interacts with TOR1A (ATP-bound); TOR1A regulates SLC6A3 subcellular location. Interacts with alpha-synuclein/SNCA. Interacts with SEPTIN4.

The protein localises to the cell membrane. It is found in the cell projection. Its subcellular location is the neuron projection. The protein resides in the axon. It carries out the reaction dopamine(out) + chloride(out) + Na(+)(out) = dopamine(in) + chloride(in) + Na(+)(in). The catalysed reaction is (R)-noradrenaline(out) + chloride(out) + Na(+)(out) = (R)-noradrenaline(in) + chloride(in) + Na(+)(in). The enzyme catalyses dopamine(out) + chloride(out) + 2 Na(+)(out) = dopamine(in) + chloride(in) + 2 Na(+)(in). Its activity is regulated as follows. Inhibited by zinc ions. Mediates sodium- and chloride-dependent transport of dopamine. Also mediates sodium- and chloride-dependent transport of norepinephrine (also known as noradrenaline). Regulator of light-dependent retinal hyaloid vessel regression, downstream of OPN5 signaling. The sequence is that of Sodium-dependent dopamine transporter (SLC6A3) from Macaca fascicularis (Crab-eating macaque).